Consider the following 522-residue polypeptide: Amine oxidase [flavin-containing] (522 aa).

Over 1-492 the chain is Cytoplasmic; it reads MTAQNTFDVI…FWERNLPSVG (492 aa). Position 399 is an S-8alpha-FAD cysteine (cysteine 399). Residues 493–513 traverse the membrane as a helical; Anchor for type IV membrane protein segment; sequence GFINFLAASVLSVATAAGMLA. Residues 514-522 are Mitochondrial intermembrane-facing; it reads YQKGLLTRS.

Belongs to the flavin monoamine oxidase family. FAD serves as cofactor.

The protein resides in the mitochondrion outer membrane. The enzyme catalyses a secondary aliphatic amine + O2 + H2O = a primary amine + an aldehyde + H2O2. Catalyzes the oxidative deamination of biogenic and xenobiotic amines and has important functions in the metabolism of neuroactive and vasoactive amines in the central nervous system and peripheral tissues. Oxidizes both 5-hydroxytryptamine (5-HT) and beta-phenylethylamine (PEA). This is Amine oxidase [flavin-containing] (mao) from Oncorhynchus mykiss (Rainbow trout).